The chain runs to 489 residues: Siroheme synthase (489 aa).

The segment at M1–L203 is precorrin-2 dehydrogenase /sirohydrochlorin ferrochelatase. NAD(+) is bound by residues P22–V23 and P43–A44. Residues G218–A489 are uroporphyrinogen-III C-methyltransferase. P227 lines the S-adenosyl-L-methionine pocket. D250 functions as the Proton acceptor in the catalytic mechanism. The active-site Proton donor is K272. Residues G303–D305, I308, T333–A334, M385, and G414 contribute to the S-adenosyl-L-methionine site.

The protein in the N-terminal section; belongs to the precorrin-2 dehydrogenase / sirohydrochlorin ferrochelatase family. It in the C-terminal section; belongs to the precorrin methyltransferase family.

The catalysed reaction is uroporphyrinogen III + 2 S-adenosyl-L-methionine = precorrin-2 + 2 S-adenosyl-L-homocysteine + H(+). It catalyses the reaction precorrin-2 + NAD(+) = sirohydrochlorin + NADH + 2 H(+). It carries out the reaction siroheme + 2 H(+) = sirohydrochlorin + Fe(2+). It participates in cofactor biosynthesis; adenosylcobalamin biosynthesis; precorrin-2 from uroporphyrinogen III: step 1/1. Its pathway is cofactor biosynthesis; adenosylcobalamin biosynthesis; sirohydrochlorin from precorrin-2: step 1/1. It functions in the pathway porphyrin-containing compound metabolism; siroheme biosynthesis; precorrin-2 from uroporphyrinogen III: step 1/1. The protein operates within porphyrin-containing compound metabolism; siroheme biosynthesis; siroheme from sirohydrochlorin: step 1/1. It participates in porphyrin-containing compound metabolism; siroheme biosynthesis; sirohydrochlorin from precorrin-2: step 1/1. Its function is as follows. Multifunctional enzyme that catalyzes the SAM-dependent methylations of uroporphyrinogen III at position C-2 and C-7 to form precorrin-2 via precorrin-1. Then it catalyzes the NAD-dependent ring dehydrogenation of precorrin-2 to yield sirohydrochlorin. Finally, it catalyzes the ferrochelation of sirohydrochlorin to yield siroheme. The chain is Siroheme synthase from Thioalkalivibrio sulfidiphilus (strain HL-EbGR7).